A 299-amino-acid chain; its full sequence is GTPase Era (299 aa).

The region spanning 9–177 (RSGSVAVIGR…VGDLLKLVPE (169 aa)) is the Era-type G domain. The G1 stretch occupies residues 17-24 (GRPNVGKS). GTP is bound at residue 17 to 24 (GRPNVGKS). The segment at 43 to 47 (QTTRH) is G2. A G3 region spans residues 64-67 (DTPG). Residues 64 to 68 (DTPGL) and 126 to 129 (NKVD) contribute to the GTP site. The G4 stretch occupies residues 126-129 (NKVD). Residues 156-158 (VSA) are G5. The 85-residue stretch at 200 to 284 (VREQLMRQLG…FLETWVRVRE (85 aa)) folds into the KH type-2 domain.

Belongs to the TRAFAC class TrmE-Era-EngA-EngB-Septin-like GTPase superfamily. Era GTPase family. In terms of assembly, monomer.

Its subcellular location is the cytoplasm. It is found in the cell inner membrane. An essential GTPase that binds both GDP and GTP, with rapid nucleotide exchange. Plays a role in 16S rRNA processing and 30S ribosomal subunit biogenesis and possibly also in cell cycle regulation and energy metabolism. The chain is GTPase Era from Xanthomonas axonopodis pv. citri (strain 306).